A 518-amino-acid chain; its full sequence is Serine--tRNA ligase, mitochondrial (518 aa).

The N-terminal 34 residues, 1–34 (MAASIVRRLGPLVAGRGLRLRGGCVCNQSFKRSF), are a transit peptide targeting the mitochondrion. Residue Lys-110 is modified to N6-acetyllysine. At Lys-195 the chain carries N6-succinyllysine. 299 to 301 (TAE) contacts L-serine. Position 330–332 (330–332 (RAE)) interacts with ATP. Lys-337 bears the N6-succinyllysine mark. Val-345 contacts ATP. An L-serine-binding site is contributed by Glu-352. Position 418-421 (418-421 (EVTS)) interacts with ATP. Thr-453 serves as a coordination point for L-serine. The tract at residues 497–518 (PLQYIGPNQPQKPRLPGQPASS) is disordered.

It belongs to the class-II aminoacyl-tRNA synthetase family. Type-1 seryl-tRNA synthetase subfamily. In terms of assembly, homodimer. The tRNA molecule probably binds across the dimer. Two N-termini starting at positions 35 and 37 have been identified by direct sequencing.

The protein localises to the mitochondrion matrix. The catalysed reaction is tRNA(Ser) + L-serine + ATP = L-seryl-tRNA(Ser) + AMP + diphosphate + H(+). The enzyme catalyses tRNA(Sec) + L-serine + ATP = L-seryl-tRNA(Sec) + AMP + diphosphate + H(+). Its pathway is aminoacyl-tRNA biosynthesis; selenocysteinyl-tRNA(Sec) biosynthesis; L-seryl-tRNA(Sec) from L-serine and tRNA(Sec): step 1/1. Its function is as follows. Catalyzes the attachment of serine to tRNA(Ser). Is also probably able to aminoacylate tRNA(Sec) with serine, to form the misacylated tRNA L-seryl-tRNA(Sec), which will be further converted into selenocysteinyl-tRNA(Sec). This is Serine--tRNA ligase, mitochondrial (SARS2) from Bos taurus (Bovine).